A 775-amino-acid chain; its full sequence is Endothelin-converting enzyme-like 1 (775 aa).

At 1 to 59 (MEPPYSLTAHYDEFQEVKYVSRCGAGGARGASLPPGFPLGAARSATGARSGLPRWNRRE) the chain is on the cytoplasmic side. A helical; Signal-anchor for type II membrane protein membrane pass occupies residues 60–82 (VCLLSGLVFAAGLCAILAAMLAL). At 83–775 (KYLGPVAAGG…MNPAHKCSVW (693 aa)) the chain is on the lumenal side. A Peptidase M13 domain is found at 98-775 (GCPERKAFAR…MNPAHKCSVW (678 aa)). 4 disulfides stabilise this stretch: Cys123-Cys760, Cys131-Cys720, Cys187-Cys441, and Cys649-Cys772. N-linked (GlcNAc...) asparagine glycosylation is found at Asn255 and Asn322. Residue His612 participates in Zn(2+) binding. Glu613 is a catalytic residue. Position 616 (His616) interacts with Zn(2+). N-linked (GlcNAc...) asparagine glycosylation is present at Asn656. Glu672 is a Zn(2+) binding site. Asp676 serves as the catalytic Proton donor.

It belongs to the peptidase M13 family. Requires Zn(2+) as cofactor. In terms of processing, N-glycosylated. As to expression, highly expressed in the CNS, in particular in putamen, spinal cord, medulla and subthalamic nucleus. A strong signal was also detected in uterine subepithelial cells and around renal blood vessels. Detected at lower levels in amygdala, caudate, thalamus, pancreas and skeletal muscle. Detected at very low levels in substantia nigra, cerebellum, cortex, corpus callosum and hippocampus.

The protein resides in the membrane. Functionally, may contribute to the degradation of peptide hormones and be involved in the inactivation of neuronal peptides. The polypeptide is Endothelin-converting enzyme-like 1 (ECEL1) (Homo sapiens (Human)).